The following is a 1317-amino-acid chain: Kinesin-like protein KIF16B (1317 aa).

Positions 3 to 358 constitute a Kinesin motor domain; sequence SVKVAVRVRP…LRYANRAKNI (356 aa). 102–109 contributes to the ATP binding site; the sequence is GQTGSGKS. Residues 370 to 425 are a coiled coil; it reads VKLIRELRAEIARLKTLLAQGNQIALLDSPTALSMEEKLQQNEARVQELTKEWTNK. Residue serine 398 is modified to Phosphoserine. In terms of domain architecture, FHA spans 478–529; it reads TYVGRDDASTEQDIVLHGLDLESEHCIFENIGGTVTLIPLSGSQCSVNGVQI. Threonine 577 is subject to Phosphothreonine. Position 582 is a phosphoserine (serine 582). Coiled coils occupy residues 595 to 882 and 936 to 1087; these read GLEF…DESV and LSLD…VQKD. Polar residues predominate over residues 1036 to 1048; sequence LASLNSGSREQSG. A disordered region spans residues 1036-1057; it reads LASLNSGSREQSGLQASLEAEQ. Residue serine 1052 is modified to Phosphoserine. In terms of domain architecture, PX spans 1182–1296; that stretch reads DPIKISIPRY…KVGLTLSKHT (115 aa).

It belongs to the TRAFAC class myosin-kinesin ATPase superfamily. Kinesin family. As to quaternary structure, interacts with RAB14. Interacts with PTPN21. In terms of tissue distribution, primarily expressed in brain. Also present in kidney, liver, intestine, placenta, leukocytes, heart and skeletal muscle (at protein level).

The protein localises to the cytoplasm. The protein resides in the cytoskeleton. It localises to the early endosome membrane. It is found in the spindle. Its function is as follows. Plus end-directed microtubule-dependent motor protein involved in endosome transport and receptor recycling and degradation. Regulates the plus end motility of early endosomes and the balance between recycling and degradation of receptors such as EGF receptor (EGFR) and FGF receptor (FGFR). Regulates the Golgi to endosome transport of FGFR-containing vesicles during early development, a key process for developing basement membrane and epiblast and primitive endoderm lineages during early postimplantation development. The sequence is that of Kinesin-like protein KIF16B (KIF16B) from Homo sapiens (Human).